The primary structure comprises 99 residues: Small integral membrane protein 14 (99 aa).

The Lumenal segment spans residues 1–49 (MAEGGFDPCECVCSHEHAMRRLINLLRQSQSYCTDTECLQELPGPSSDN). Residues 50–70 (GISITMILMAWMVIAVILFLL) form a helical membrane-spanning segment. The Cytoplasmic segment spans residues 71–99 (RPPNLRGSNLTGKPASPHNGQDPPAPPVD). Residues 78-99 (SNLTGKPASPHNGQDPPAPPVD) form a disordered region.

Its subcellular location is the endoplasmic reticulum membrane. The chain is Small integral membrane protein 14 (SMIM14) from Bos taurus (Bovine).